The sequence spans 106 residues: L-rhamnose mutarotase (106 aa).

Tyrosine 20 is a substrate binding site. Histidine 24 (proton donor) is an active-site residue. Substrate is bound by residues tyrosine 43 and 78-79 (WW).

Belongs to the rhamnose mutarotase family. As to quaternary structure, homodimer.

The protein localises to the cytoplasm. It carries out the reaction alpha-L-rhamnose = beta-L-rhamnose. It functions in the pathway carbohydrate metabolism; L-rhamnose metabolism. Involved in the anomeric conversion of L-rhamnose. The protein is L-rhamnose mutarotase of Verminephrobacter eiseniae (strain EF01-2).